The chain runs to 460 residues: ATP synthase subunit beta (460 aa).

An ATP-binding site is contributed by 149–156; that stretch reads GGAGVGKT.

It belongs to the ATPase alpha/beta chains family. In terms of assembly, F-type ATPases have 2 components, CF(1) - the catalytic core - and CF(0) - the membrane proton channel. CF(1) has five subunits: alpha(3), beta(3), gamma(1), delta(1), epsilon(1). CF(0) has three main subunits: a(1), b(2) and c(9-12). The alpha and beta chains form an alternating ring which encloses part of the gamma chain. CF(1) is attached to CF(0) by a central stalk formed by the gamma and epsilon chains, while a peripheral stalk is formed by the delta and b chains.

It localises to the cell membrane. It catalyses the reaction ATP + H2O + 4 H(+)(in) = ADP + phosphate + 5 H(+)(out). Produces ATP from ADP in the presence of a proton gradient across the membrane. The catalytic sites are hosted primarily by the beta subunits. The protein is ATP synthase subunit beta of Acholeplasma laidlawii (strain PG-8A).